The sequence spans 213 residues: Charged multivesicular body protein 2b (213 aa).

Position 2 is an N-acetylalanine (Ala2). Residues 25–55 (QRAIIRDRAALEKQEKQLELEIKKMAKIGNK) adopt a coiled-coil conformation. Low complexity predominate over residues 179–194 (AKAPSAARSLPSASTS). Residues 179-199 (AKAPSAARSLPSASTSKATIS) form a disordered region. The residue at position 199 (Ser199) is a Phosphoserine. The short motif at 201–211 (EEIERQLKALG) is the MIT-interacting motif element.

Belongs to the SNF7 family. As to quaternary structure, probable core component of the endosomal sorting required for transport complex III (ESCRT-III). ESCRT-III components are thought to multimerize to form a flat lattice on the perimeter membrane of the endosome. Several assembly forms of ESCRT-III may exist that interact and act sequentially. Interacts with CHMP2A. Interacts with VPS4A. Interacts with VPS4B; the interaction is direct. In terms of tissue distribution, in brain, it is expressed in all neuronal populations with a relatively enhanced expression in the hippocampus, frontal and temporal lobes and in both granule and Purkinje cells of the cerebellum. Not expressed in astrocytes or oligodendrocytes.

It is found in the cytoplasm. Its subcellular location is the cytosol. The protein localises to the late endosome membrane. In terms of biological role, probable core component of the endosomal sorting required for transport complex III (ESCRT-III) which is involved in multivesicular bodies (MVBs) formation and sorting of endosomal cargo proteins into MVBs. MVBs contain intraluminal vesicles (ILVs) that are generated by invagination and scission from the limiting membrane of the endosome and mostly are delivered to lysosomes enabling degradation of membrane proteins, such as stimulated growth factor receptors, lysosomal enzymes and lipids. The MVB pathway appears to require the sequential function of ESCRT-O, -I,-II and -III complexes. ESCRT-III proteins mostly dissociate from the invaginating membrane before the ILV is released. The ESCRT machinery also functions in topologically equivalent membrane fission events, such as the terminal stages of cytokinesis. ESCRT-III proteins are believed to mediate the necessary vesicle extrusion and/or membrane fission activities, possibly in conjunction with the AAA ATPase VPS4. The protein is Charged multivesicular body protein 2b (Chmp2b) of Mus musculus (Mouse).